Reading from the N-terminus, the 76-residue chain is Theta defensin subunit B (76 aa).

Positions 1-22 are cleaved as a signal peptide; it reads MRTFALLTAMLLLVALQPQAEA. Positions 23–64 are excised as a propeptide; sequence RQARADEAAAQQQPGADDQGMAHSFTRPENAALPLSESAKGL. Residues 24-54 form a disordered region; the sequence is QARADEAAAQQQPGADDQGMAHSFTRPENAA. The segment covering 30–44 has biased composition (low complexity); that stretch reads AAAQQQPGADDQGMA. A Cyclopeptide (Arg-Cys) (interchain with C-73 in subunit A); in form BTD-1 cross-link involves residue Arg65. Arg65 is covalently cross-linked (Cyclopeptide (Arg-Cys) (interchain with C-73 in subunit B); in form BTD-2). Cys68 and Cys73 are disulfide-bonded. Cys73 is covalently cross-linked (Cyclopeptide (Cys-Arg) (interchain with R-65 in subunit A); in form BTD-1). A Cyclopeptide (Cys-Arg) (interchain with R-65 in subunit B); in form BTD-2 cross-link involves residue Cys73. A propeptide spanning residues 74–76 is cleaved from the precursor; it reads QLL.

The protein belongs to the alpha-defensin family. Theta subfamily. In terms of assembly, BTD-1 is a cyclic heterodimer composed of subunits A and B; disulfide-linked. BTD-2 is a cyclic homodimer composed of two subunits B; disulfide-linked. Forms a cyclic peptide with subunit A (BTD-1), or subunit B (BTD-2). An additional intersubunit disulfide bond is formed.

BTD-1 and BTD-2 have antimicrobial activity against the Gram-negative bacterium E.coli ML35, the Gram-positive bacterium S.aureus 502a, and the fungus C.albicans 16820. BTD-2 is more effective against E.coli than BTD-1. The protein is Theta defensin subunit B (BTDB) of Papio anubis (Olive baboon).